Here is a 28-residue protein sequence, read N- to C-terminus: QSPKDAYPYDISELVKDAYPYDISELVK.

It belongs to the 'GDSL' lipolytic enzyme family.

The protein is Putative GDSL-motif lipase/hydrolase-like protein of Populus euphratica (Euphrates poplar).